Reading from the N-terminus, the 494-residue chain is Truncated non-functional calcium-binding mitochondrial carrier SAL1-1 (494 aa).

The EF-hand 1 domain occupies 11–46 (QRDIRYACLFKELDVKGNGQVTLDNLISAFEKNDHP). Ca(2+) is bound by residues Lys-65, Asp-70, Asp-93, Asp-95, Asp-97, Lys-99, and Glu-104. 3 EF-hand domains span residues 80–115 (NAESQIWNGFQRIDLDHDGKIGINEINRYLSDLDNQ), 120–155 (NELNHELSNEKVNKFSRFFEWAFPKRKANIALRGQA), and 156–191 (SHKKNTDNDRSKKTTDSDLYVTYDQWRDFLLLVPRK). Residues Thr-161 and Ser-166 each coordinate Ca(2+). 2 Solcar repeats span residues 225 to 332 (IRGF…TKKI) and 345 to 434 (LSKF…LKKM). Transmembrane regions (helical) follow at residues 231–248 (FIAGGISGVISRTCTAPF), 307–326 (GNGLNVIKVFPESSIKFGSF), 355–368 (GLAGMAAQFSVYPI), 409–428 (RCHSRYSGHISLCCIRFGDF), and 458–475 (TSNGCIQWNCRSFCCLSN). The stretch at 452-494 (SKQPGCTSNGCIQWNCRSFCCLSNQSFKNKTTSPRNICTSLCV) is one Solcar 3; truncated repeat.

The protein belongs to the mitochondrial carrier (TC 2.A.29) family.

Its subcellular location is the mitochondrion inner membrane. Functionally, calcium-dependent mitochondrial solute carrier. The polypeptide is Truncated non-functional calcium-binding mitochondrial carrier SAL1-1 (SAL1) (Saccharomyces cerevisiae (strain ATCC 204508 / S288c) (Baker's yeast)).